The sequence spans 72 residues: uncharacterized protein (72 aa).

The protein belongs to the asfivirus I73R family.

It localises to the virion. This is an uncharacterized protein from African swine fever virus (isolate Warthog/Namibia/Wart80/1980) (ASFV).